Here is a 363-residue protein sequence, read N- to C-terminus: MKKKFRIAVLPGDGIGPEVMREAYKILNILERKFFLKLELREFDIGGIAIDREGIALPEKTLRGCENSDAILFGSVGGKKWDYLPIESRPERASLLPLRKHFNLFSNLRPAKLRVDLKNLSPLRSDIVRDGFDILCIRELTGGIYFGKPKGRFKNKNGEYAFDTEIYYDFEIERIANLAFELASSRRCKVCSIDKANVLESSVLWREIVKKVSKNYPDVHLSHLYIDNACMQIIKNPTQFDILLCSNIFGDIISDECAMITGSIGMLPSASLNNQKFGLYEPAGGSAPDIEGKNIANPIAQILSLSMLIRYSMNLNEIADKIDLSVHYALKEGYRTLDISDGKNYIKTNEMGDIIAEFLDNGK.

78-91 lines the NAD(+) pocket; the sequence is GKKWDYLPIESRPE. Residues Arg99, Arg109, Arg138, and Asp227 each contribute to the substrate site. Residues Asp227, Asp251, and Asp255 each coordinate Mg(2+). Position 285–297 (285–297) interacts with NAD(+); that stretch reads GSAPDIEGKNIAN.

The protein belongs to the isocitrate and isopropylmalate dehydrogenases family. LeuB type 1 subfamily. Homodimer. Mg(2+) is required as a cofactor. The cofactor is Mn(2+).

Its subcellular location is the cytoplasm. It carries out the reaction (2R,3S)-3-isopropylmalate + NAD(+) = 4-methyl-2-oxopentanoate + CO2 + NADH. The protein operates within amino-acid biosynthesis; L-leucine biosynthesis; L-leucine from 3-methyl-2-oxobutanoate: step 3/4. Its function is as follows. Catalyzes the oxidation of 3-carboxy-2-hydroxy-4-methylpentanoate (3-isopropylmalate) to 3-carboxy-4-methyl-2-oxopentanoate. The product decarboxylates to 4-methyl-2 oxopentanoate. The sequence is that of 3-isopropylmalate dehydrogenase from Buchnera aphidicola subsp. Schizaphis graminum (strain Sg).